The chain runs to 348 residues: Serine/threonine-protein kinase SBK2 (348 aa).

A disordered region spans residues 1-25; the sequence is MPGKQSEEGPAEAGASEDSEEEGLG. One can recognise a Protein kinase domain in the interval 62 to 330; it reads YEEVRPLGQG…IREHLGRPWR (269 aa). ATP-binding positions include 68 to 76 and Lys-91; that span reads LGQGCYGRV. Asp-183 functions as the Proton acceptor in the catalytic mechanism.

It belongs to the protein kinase superfamily. Ser/Thr protein kinase family. STKL subfamily.

The catalysed reaction is L-seryl-[protein] + ATP = O-phospho-L-seryl-[protein] + ADP + H(+). The enzyme catalyses L-threonyl-[protein] + ATP = O-phospho-L-threonyl-[protein] + ADP + H(+). This is Serine/threonine-protein kinase SBK2 (SBK2) from Homo sapiens (Human).